A 277-amino-acid polypeptide reads, in one-letter code: Large ribosomal subunit protein uL2 (277 aa).

Residues 222–277 form a disordered region; that stretch reads GSVMNPNDHPHGGGEGKSPVGHPGPLTPWGKPALGLKTRKNKKYSDKFIIKRKNKK.

The protein belongs to the universal ribosomal protein uL2 family. In terms of assembly, part of the 50S ribosomal subunit. Forms a bridge to the 30S subunit in the 70S ribosome.

Its function is as follows. One of the primary rRNA binding proteins. Required for association of the 30S and 50S subunits to form the 70S ribosome, for tRNA binding and peptide bond formation. It has been suggested to have peptidyltransferase activity; this is somewhat controversial. Makes several contacts with the 16S rRNA in the 70S ribosome. The protein is Large ribosomal subunit protein uL2 of Clostridium kluyveri (strain NBRC 12016).